Consider the following 554-residue polypeptide: Nuclear division defective protein 1 (554 aa).

Disordered regions lie at residues Met-1–Asp-31 and Ile-98–Ser-117. A compositionally biased stretch (low complexity) spans Ile-98–Gln-113. Thr-319 carries the post-translational modification Phosphothreonine; by CDC28. Disordered regions lie at residues Pro-410–Pro-475 and Ser-493–Gln-554. Residues Thr-411–Leu-427 are compositionally biased toward polar residues. A compositionally biased stretch (low complexity) spans Ser-448–Lys-465. A compositionally biased stretch (basic residues) spans Gly-466–Pro-475. Low complexity predominate over residues Ser-493–Asn-513. The segment covering Thr-515–Arg-524 has biased composition (basic residues). A compositionally biased stretch (low complexity) spans Ser-525–Ser-536. The segment covering Arg-539–Gln-554 has biased composition (polar residues).

As to quaternary structure, forms an activator complex with FKH2. In terms of processing, phosphorylation of Thr-319 by CDC28 is required for the interaction with FKH2 and recruitment to promoters.

Its subcellular location is the cytoplasm. The protein resides in the nucleus. Its function is as follows. Transcription activator involved in G2/M transcription through its association with FKH2. In Saccharomyces cerevisiae (strain ATCC 204508 / S288c) (Baker's yeast), this protein is Nuclear division defective protein 1 (NDD1).